A 262-amino-acid chain; its full sequence is Small ribosomal subunit protein eS1 (262 aa).

This sequence belongs to the eukaryotic ribosomal protein eS1 family. In terms of assembly, component of the small ribosomal subunit. Mature ribosomes consist of a small (40S) and a large (60S) subunit. The 40S subunit contains about 33 different proteins and 1 molecule of RNA (18S). The 60S subunit contains about 49 different proteins and 3 molecules of RNA (25S, 5.8S and 5S).

The protein resides in the cytoplasm. The chain is Small ribosomal subunit protein eS1 from Plasmodium vivax (strain Salvador I).